Here is a 91-residue protein sequence, read N- to C-terminus: B3 domain-containing protein Os03g0164300 (91 aa).

Residues 1–91 (MTNAKMTFAV…VLVLKVHVLK (91 aa)) constitute a DNA-binding region (TF-B3).

It is found in the nucleus. This chain is B3 domain-containing protein Os03g0164300, found in Oryza sativa subsp. japonica (Rice).